We begin with the raw amino-acid sequence, 248 residues long: tRNA (guanine-N(1)-)-methyltransferase (248 aa).

S-adenosyl-L-methionine contacts are provided by residues Gly113 and Ile133 to Leu138.

It belongs to the RNA methyltransferase TrmD family. As to quaternary structure, homodimer.

It is found in the cytoplasm. It carries out the reaction guanosine(37) in tRNA + S-adenosyl-L-methionine = N(1)-methylguanosine(37) in tRNA + S-adenosyl-L-homocysteine + H(+). Specifically methylates guanosine-37 in various tRNAs. This Shewanella baltica (strain OS223) protein is tRNA (guanine-N(1)-)-methyltransferase.